Consider the following 215-residue polypeptide: Probable ribosome-binding factor A, chloroplastic (215 aa).

The transit peptide at 1-52 directs the protein to the chloroplast; the sequence is MPNLLHTNQSHFFFLHHPPIYTVSSKTQAFHFPQSMAPVNLRTNLSVRRTVR. Over residues 183-192 the composition is skewed to basic and acidic residues; it reads KGSGEGKTEP. Positions 183-210 are disordered; sequence KGSGEGKTEPSDSTEDDQDWEVDDPDED. Positions 194–210 are enriched in acidic residues; the sequence is DSTEDDQDWEVDDPDED.

This sequence belongs to the RbfA family.

The protein localises to the plastid. It is found in the chloroplast. The protein is Probable ribosome-binding factor A, chloroplastic of Arabidopsis thaliana (Mouse-ear cress).